We begin with the raw amino-acid sequence, 139 residues long: Probable DNA-binding protein (139 aa).

The disordered stretch occupies residues 97 to 139 (DEPSREASPDLGAAGAELEDESAQAGAVQGPETLRSQVLRART).

The protein is Probable DNA-binding protein of Homo sapiens (Human).